The primary structure comprises 193 residues: Dual-action ribosomal maturation protein DarP (193 aa).

A compositionally biased stretch (basic and acidic residues) spans 1–10 (MRGRDEDTGE). 2 disordered regions span residues 1–20 (MRGR…SQQR) and 171–193 (QEQG…EDDE). Residues 181 to 193 (GLEDGESALEDDE) are compositionally biased toward acidic residues.

It belongs to the DarP family.

Its subcellular location is the cytoplasm. Member of a network of 50S ribosomal subunit biogenesis factors which assembles along the 30S-50S interface, preventing incorrect 23S rRNA structures from forming. Promotes peptidyl transferase center (PTC) maturation. This Xanthomonas oryzae pv. oryzae (strain KACC10331 / KXO85) protein is Dual-action ribosomal maturation protein DarP.